A 575-amino-acid chain; its full sequence is Sulfite reductase [NADPH] hemoprotein beta-component (575 aa).

Positions 438, 444, 484, and 488 each coordinate [4Fe-4S] cluster. Siroheme is bound at residue Cys488.

This sequence belongs to the nitrite and sulfite reductase 4Fe-4S domain family. As to quaternary structure, alpha(8)-beta(8). The alpha component is a flavoprotein, the beta component is a hemoprotein. Siroheme is required as a cofactor. The cofactor is [4Fe-4S] cluster.

It carries out the reaction hydrogen sulfide + 3 NADP(+) + 3 H2O = sulfite + 3 NADPH + 4 H(+). It participates in sulfur metabolism; hydrogen sulfide biosynthesis; hydrogen sulfide from sulfite (NADPH route): step 1/1. Component of the sulfite reductase complex that catalyzes the 6-electron reduction of sulfite to sulfide. This is one of several activities required for the biosynthesis of L-cysteine from sulfate. The sequence is that of Sulfite reductase [NADPH] hemoprotein beta-component from Vibrio atlanticus (strain LGP32) (Vibrio splendidus (strain Mel32)).